The following is a 723-amino-acid chain: E3 ubiquitin-protein ligase LRSAM1 (723 aa).

LRR repeat units lie at residues 30–51 (ADDI…AFAT), 56–77 (QKKV…SCSL), 82–103 (TIKV…LGQL), 105–127 (ALQV…GNLT), 128–149 (QLQT…VGEL), and 151–172 (SLRT…LAHV). Ser-234 bears the Phosphoserine mark. Coiled coils occupy residues 254-380 (SDYE…TESL) and 510-562 (ALSS…KPLS). Positions 282-314 (TQLLQQSSSQKDEILQTVKEEQSRLEQGLSEHQ) are disordered. Positions 291–314 (QKDEILQTVKEEQSRLEQGLSEHQ) are enriched in basic and acidic residues. The region spanning 569 to 632 (GMERQLVALL…LRRVQELLDA (64 aa)) is the SAM domain. Phosphoserine is present on Ser-604. The segment at 642–665 (PMGEVVTPTAPQEPPESVRPSAPP) is disordered. 2 short sequence motifs (PTAP motif) span residues 649 to 652 (PTAP) and 661 to 664 (PSAP). The RING-type zinc finger occupies 675-710 (CVVCLEREAQMIFLNCGHVCCCQQCCQPLRTCPLCR).

In terms of assembly, interacts with TSG101. Interacts with PHF23. Interacts with FUS. Ubiquitination promoted by PHF23 leads to proteasomal degradation. In terms of tissue distribution, highly expressed in adult spinal cord motoneurons as well as in fetal spinal cord and muscle tissue.

The protein resides in the cytoplasm. It carries out the reaction S-ubiquitinyl-[E2 ubiquitin-conjugating enzyme]-L-cysteine + [acceptor protein]-L-lysine = [E2 ubiquitin-conjugating enzyme]-L-cysteine + N(6)-ubiquitinyl-[acceptor protein]-L-lysine.. Its pathway is protein modification; protein ubiquitination. In terms of biological role, E3 ubiquitin-protein ligase that mediates monoubiquitination of TSG101 at multiple sites, leading to inactivate the ability of TSG101 to sort endocytic (EGF receptors) and exocytic (HIV-1 viral proteins) cargos. Bacterial recognition protein that defends the cytoplasm from invasive pathogens. Localizes to several intracellular bacterial pathogens and generates the bacteria-associated ubiquitin signal leading to autophagy-mediated intracellular bacteria degradation (xenophagy). The polypeptide is E3 ubiquitin-protein ligase LRSAM1 (Homo sapiens (Human)).